A 1127-amino-acid chain; its full sequence is Zinc finger protein basonuclin-2 (1127 aa).

Residues 44 to 67 (SEEAEVDVRERDTQRDREPKRARD) are disordered. Residues 49 to 67 (VDVRERDTQRDREPKRARD) show a composition bias toward basic and acidic residues. Lys-305 participates in a covalent cross-link: Glycyl lysine isopeptide (Lys-Gly) (interchain with G-Cter in SUMO2). Residues 386-450 (STQNEYNESS…DLSKTEHPKS (65 aa)) are disordered. Over residues 389-400 (NEYNESSESEVS) the composition is skewed to low complexity. Positions 403 to 422 (PYKSDQTPNRNALTSITNVE) are enriched in polar residues. Residues Lys-424, Lys-444, and Lys-449 each participate in a glycyl lysine isopeptide (Lys-Gly) (interchain with G-Cter in SUMO2) cross-link. The C2H2-type 1 zinc-finger motif lies at 469–492 (VFCNACGKTFYDKGTLKIHYNAVH). Phosphoserine is present on Ser-589. Lys-669 participates in a covalent cross-link: Glycyl lysine isopeptide (Lys-Gly) (interchain with G-Cter in SUMO2). Residues 675-772 (IDTADEFDDE…EESMEGDEHL (98 aa)) form a disordered region. Positions 676–689 (DTADEFDDEDDDPN) are enriched in acidic residues. Basic and acidic residues-rich tracts occupy residues 698-708 (MSHDNHCHSQD) and 747-772 (ERDY…DEHL). Residues 861–884 (KICYVCKKSFKSSYSVKLHYRNVH) form a C2H2-type 2 zinc finger. Glycyl lysine isopeptide (Lys-Gly) (interchain with G-Cter in SUMO2) cross-links involve residues Lys-922 and Lys-947. Disordered regions lie at residues 955-976 (LGLD…HLNG) and 996-1041 (LQSS…TLPG). The segment covering 1010–1023 (AGSDEGILLDDIDG) has biased composition (acidic residues). 2 consecutive C2H2-type zinc fingers follow at residues 1063–1086 (IMCN…KTVH) and 1091–1118 (HKCK…PNLH). Residues 1107–1127 (SRNRHSQNPNLHKNIPFTSID) form a disordered region.

In terms of tissue distribution, highly expressed in ovary, testis and kidney. Expressed at moderate levels in skin and small intestine, and at lower levels in lung. Trace amounts of expression detected in liver and colon. Not detected in brain, spleen or thymus.

It localises to the nucleus. Probable transcription factor specific for skin keratinocytes. May play a role in the differentiation of spermatozoa and oocytes. May also play an important role in early urinary-tract development. The chain is Zinc finger protein basonuclin-2 from Mus musculus (Mouse).